Consider the following 369-residue polypeptide: RING-H2 finger protein ATL47 (369 aa).

A helical membrane pass occupies residues 52–72; it reads IILFIIVLLSVIFFICSILHL. Residues 144-186 form an RING-type; atypical zinc finger; the sequence is CAVCLCEFSEDDKLRLLPNCSHAFHIDCIDTWLLSNSTCPLCR. The disordered stretch occupies residues 332–355; the sequence is NNHPSETNLVVGGSSSSSSYVCSG. Residues 341–355 show a composition bias toward low complexity; sequence VVGGSSSSSSYVCSG.

Belongs to the RING-type zinc finger family. ATL subfamily.

The protein resides in the membrane. The enzyme catalyses S-ubiquitinyl-[E2 ubiquitin-conjugating enzyme]-L-cysteine + [acceptor protein]-L-lysine = [E2 ubiquitin-conjugating enzyme]-L-cysteine + N(6)-ubiquitinyl-[acceptor protein]-L-lysine.. Its pathway is protein modification; protein ubiquitination. This chain is RING-H2 finger protein ATL47 (ATL47), found in Arabidopsis thaliana (Mouse-ear cress).